We begin with the raw amino-acid sequence, 346 residues long: Sugar utilization regulatory protein IMP2 (346 aa).

Positions 1–29 (MQKSILLTKPDGTQSNLHSIKTETPTTVE) are enriched in polar residues. 2 disordered regions span residues 1–74 (MQKS…RVRE) and 91–132 (LRVV…DIEN). Threonine 24 carries the post-translational modification Phosphothreonine. The span at 40 to 49 (RERGRSKKKR) shows a compositional bias: basic residues. A compositionally biased stretch (acidic residues) spans 96-132 (VDSEEEGEGNDEDDDDGDGDDMDEEESDEEQVSDIEN).

In terms of biological role, controls the nucleo-mitochondrial dependence of galactose, maltose and raffinose utilization. Becomes essential in the absence of functioning mitochondria. The sequence is that of Sugar utilization regulatory protein IMP2 (IMP2') from Saccharomyces cerevisiae (strain ATCC 204508 / S288c) (Baker's yeast).